The following is a 298-amino-acid chain: Inosose dehydratase (298 aa).

Belongs to the IolE/MocC family. It depends on glutathione as a cofactor. Co(2+) serves as cofactor. The cofactor is Mn(2+).

It catalyses the reaction scyllo-inosose = 3D-3,5/4-trihydroxycyclohexane-1,2-dione + H2O. The protein operates within polyol metabolism; myo-inositol degradation into acetyl-CoA; acetyl-CoA from myo-inositol: step 2/7. Functionally, catalyzes the dehydration of inosose (2-keto-myo-inositol, 2KMI or 2,4,6/3,5-pentahydroxycyclohexanone) to 3D-(3,5/4)-trihydroxycyclohexane-1,2-dione (D-2,3-diketo-4-deoxy-epi-inositol). In Lacticaseibacillus casei (Lactobacillus casei), this protein is Inosose dehydratase.